A 346-amino-acid polypeptide reads, in one-letter code: Selenide, water dikinase (346 aa).

The active site involves U16. Position 16 (U16) is a non-standard amino acid, selenocysteine. Residues K19 and 47–49 (TAD) contribute to the ATP site. Position 50 (D50) interacts with Mg(2+). Residues D67, D90, and 138-140 (GHS) each bind ATP. D90 contributes to the Mg(2+) binding site. Position 226 (D226) interacts with Mg(2+).

Belongs to the selenophosphate synthase 1 family. Class I subfamily. As to quaternary structure, homodimer. Mg(2+) is required as a cofactor.

The enzyme catalyses hydrogenselenide + ATP + H2O = selenophosphate + AMP + phosphate + 2 H(+). Synthesizes selenophosphate from selenide and ATP. This is Selenide, water dikinase from Haemophilus ducreyi (strain 35000HP / ATCC 700724).